The following is a 202-amino-acid chain: Dephospho-CoA kinase (202 aa).

The 197-residue stretch at 6 to 202 (KVSITGDLSS…EYFYALKGAL (197 aa)) folds into the DPCK domain. 14 to 19 (SSGKTE) provides a ligand contact to ATP.

It belongs to the CoaE family.

Its subcellular location is the cytoplasm. It carries out the reaction 3'-dephospho-CoA + ATP = ADP + CoA + H(+). Its pathway is cofactor biosynthesis; coenzyme A biosynthesis; CoA from (R)-pantothenate: step 5/5. Functionally, catalyzes the phosphorylation of the 3'-hydroxyl group of dephosphocoenzyme A to form coenzyme A. This chain is Dephospho-CoA kinase, found in Chlamydia abortus (strain DSM 27085 / S26/3) (Chlamydophila abortus).